The chain runs to 117 residues: Glycoprotein hormones alpha chain (117 aa).

The signal sequence occupies residues 1 to 23; the sequence is MGSVKSAGLSLLLLSFLLYVADS. 5 cysteine pairs are disulfide-bonded: C34/C57, C37/C86, C54/C107, C58/C109, and C85/C112. N-linked (GlcNAc...) asparagine glycosylation is found at N78 and N103.

This sequence belongs to the glycoprotein hormones subunit alpha family. As to quaternary structure, heterodimer. Glycoprotein hormones are heterodimers composed of a common alpha chain described here and a unique beta chain which confers their biological specificity to the different hormones.

Its subcellular location is the secreted. Its function is as follows. Shared alpha chain of heterodimeric glycoprotein hormones. These hormones bind specific receptors on target cells that in turn activate downstream signaling pathways. Involved in gametogenesis and steroidogenesis. The protein is Glycoprotein hormones alpha chain (cga) of Acanthopagrus latus (Yellowfin seabream).